The following is a 113-amino-acid chain: Large ribosomal subunit protein bL19 (113 aa).

This sequence belongs to the bacterial ribosomal protein bL19 family.

This protein is located at the 30S-50S ribosomal subunit interface and may play a role in the structure and function of the aminoacyl-tRNA binding site. The sequence is that of Large ribosomal subunit protein bL19 from Natranaerobius thermophilus (strain ATCC BAA-1301 / DSM 18059 / JW/NM-WN-LF).